A 447-amino-acid chain; its full sequence is Tubulin beta chain (447 aa).

Residues Q11, E69, S138, G142, T143, G144, N204, and N226 each coordinate GTP. E69 is a binding site for Mg(2+). A disordered region spans residues 424-447 (QYQEASVSDAEEEYDEEAPLEGEE). Acidic residues predominate over residues 432 to 447 (DAEEEYDEEAPLEGEE).

The protein belongs to the tubulin family. In terms of assembly, dimer of alpha and beta chains. A typical microtubule is a hollow water-filled tube with an outer diameter of 25 nm and an inner diameter of 15 nM. Alpha-beta heterodimers associate head-to-tail to form protofilaments running lengthwise along the microtubule wall with the beta-tubulin subunit facing the microtubule plus end conferring a structural polarity. Microtubules usually have 13 protofilaments but different protofilament numbers can be found in some organisms and specialized cells. Requires Mg(2+) as cofactor.

The protein resides in the cytoplasm. The protein localises to the cytoskeleton. Functionally, tubulin is the major constituent of microtubules, a cylinder consisting of laterally associated linear protofilaments composed of alpha- and beta-tubulin heterodimers. Microtubules grow by the addition of GTP-tubulin dimers to the microtubule end, where a stabilizing cap forms. Below the cap, tubulin dimers are in GDP-bound state, owing to GTPase activity of alpha-tubulin. This is Tubulin beta chain (TUB1) from Zymoseptoria tritici (Speckled leaf blotch fungus).